The chain runs to 1377 residues: DNA-directed RNA polymerase subunit beta (1377 aa).

The protein belongs to the RNA polymerase beta chain family. As to quaternary structure, the RNAP catalytic core consists of 2 alpha, 1 beta, 1 beta' and 1 omega subunit. When a sigma factor is associated with the core the holoenzyme is formed, which can initiate transcription.

The catalysed reaction is RNA(n) + a ribonucleoside 5'-triphosphate = RNA(n+1) + diphosphate. Functionally, DNA-dependent RNA polymerase catalyzes the transcription of DNA into RNA using the four ribonucleoside triphosphates as substrates. This chain is DNA-directed RNA polymerase subunit beta, found in Cereibacter sphaeroides (strain ATCC 17029 / ATH 2.4.9) (Rhodobacter sphaeroides).